An 89-amino-acid polypeptide reads, in one-letter code: Small ribosomal subunit protein bS20 (89 aa).

The disordered stretch occupies residues 1–26; that stretch reads MANSAQARKRARQADGQRSHNASLRS.

Belongs to the bacterial ribosomal protein bS20 family.

Binds directly to 16S ribosomal RNA. The protein is Small ribosomal subunit protein bS20 of Dechloromonas aromatica (strain RCB).